Consider the following 193-residue polypeptide: Activity-regulated cytoskeleton associated protein 2 (193 aa).

It belongs to the ARC/ARG3.1 family. As to quaternary structure, homooligomer; homooligomerizes into virion-like capsids.

The protein resides in the extracellular vesicle membrane. Self-assembles into virion-like capsids that encapsulate RNAs and mediate intercellular RNA transfer. Arc2 protein is released from cells in extracellular vesicles that mediate the transfer of mRNA into neighboring cells. The protein is Activity-regulated cytoskeleton associated protein 2 of Drosophila melanogaster (Fruit fly).